The primary structure comprises 224 residues: Ribonuclease HII (224 aa).

Positions 36–224 (RGVAGVDEVG…RRSFLRRFLG (189 aa)) constitute an RNase H type-2 domain. Aspartate 42, glutamate 43, and aspartate 138 together coordinate a divalent metal cation.

This sequence belongs to the RNase HII family. Requires Mn(2+) as cofactor. It depends on Mg(2+) as a cofactor.

The protein localises to the cytoplasm. It catalyses the reaction Endonucleolytic cleavage to 5'-phosphomonoester.. Functionally, endonuclease that specifically degrades the RNA of RNA-DNA hybrids. This Parasynechococcus marenigrum (strain WH8102) protein is Ribonuclease HII.